The sequence spans 269 residues: Ribosomal RNA small subunit methyltransferase J (269 aa).

Residues 125–126 and Asp-179 contribute to the S-adenosyl-L-methionine site; that span reads ER.

Belongs to the methyltransferase superfamily. RsmJ family.

It localises to the cytoplasm. It carries out the reaction guanosine(1516) in 16S rRNA + S-adenosyl-L-methionine = N(2)-methylguanosine(1516) in 16S rRNA + S-adenosyl-L-homocysteine + H(+). Functionally, specifically methylates the guanosine in position 1516 of 16S rRNA. This is Ribosomal RNA small subunit methyltransferase J from Pseudomonas syringae pv. tomato (strain ATCC BAA-871 / DC3000).